A 244-amino-acid chain; its full sequence is MAAPSDGFKPRERSGGEQAQDWDALPPKRPRLGAGNKIGGRRLIVVLEGASLETVKVGKTYELLNCDKHKSILLKNGRDPGEARPDITHQSLLMLMDSPLNRAGLLQVYIHTQKNVLIEVNPQTRIPRTFDRFCGLMVQLLHKLSVRAADGPQKLLKVIKNPVSDHFPVGCMKVGTSFSIPVVSDVRELVPSSDPIVFVVGAFAHGKVSVEYTEKMVSISNYPLSAALTCAKLTTAFEEVWGVI.

The interval 1–34 is disordered; the sequence is MAAPSDGFKPRERSGGEQAQDWDALPPKRPRLGA. Position 2 is an N-acetylalanine (A2). S5 and S14 each carry phosphoserine. S-adenosyl-L-methionine is bound by residues T176, G201, G206, and 219–224; that span reads ISNYPL.

This sequence belongs to the class IV-like SAM-binding methyltransferase superfamily. RNA methyltransferase NEP1 family. Homodimer. Part of the small subunit (SSU) processome, composed of more than 70 proteins and the RNA chaperone small nucleolar RNA (snoRNA) U3.

Its subcellular location is the nucleus. The protein resides in the nucleolus. The catalysed reaction is pseudouridine(1248) in human 18S rRNA + S-adenosyl-L-methionine = N(1)-methylpseudouridine(1248) in human 18S rRNA + S-adenosyl-L-homocysteine + H(+). S-adenosyl-L-methionine-dependent pseudouridine N(1)-methyltransferase that methylates pseudouridine at position 1248 (Psi1248) in 18S rRNA. Involved the biosynthesis of the hypermodified N1-methyl-N3-(3-amino-3-carboxypropyl) pseudouridine (m1acp3-Psi) conserved in eukaryotic 18S rRNA. Is not able to methylate uridine at this position. Also has an essential role in 40S ribosomal subunit biogenesis independent on its methyltransferase activity, facilitating the incorporation of ribosomal protein S19 during the formation of pre-ribosomes. Part of the small subunit (SSU) processome, first precursor of the small eukaryotic ribosomal subunit. During the assembly of the SSU processome in the nucleolus, many ribosome biogenesis factors, an RNA chaperone and ribosomal proteins associate with the nascent pre-rRNA and work in concert to generate RNA folding, modifications, rearrangements and cleavage as well as targeted degradation of pre-ribosomal RNA by the RNA exosome. The protein is Ribosomal RNA small subunit methyltransferase NEP1 of Homo sapiens (Human).